Consider the following 427-residue polypeptide: Serine hydroxymethyltransferase (427 aa).

120 to 122 (GHI) serves as a coordination point for (6S)-5,6,7,8-tetrahydrofolate. Residue Lys-226 is modified to N6-(pyridoxal phosphate)lysine.

This sequence belongs to the SHMT family. In terms of assembly, homodimer. Requires pyridoxal 5'-phosphate as cofactor.

It localises to the cytoplasm. It functions in the pathway amino-acid biosynthesis; glycine biosynthesis; glycine from L-serine: step 1/1. Its function is as follows. Catalyzes the reversible interconversion of serine and glycine with a modified folate serving as the one-carbon carrier. Also exhibits a pteridine-independent aldolase activity toward beta-hydroxyamino acids, producing glycine and aldehydes, via a retro-aldol mechanism. The sequence is that of Serine hydroxymethyltransferase from Pyrococcus horikoshii (strain ATCC 700860 / DSM 12428 / JCM 9974 / NBRC 100139 / OT-3).